A 136-amino-acid chain; its full sequence is ATP synthase epsilon chain (136 aa).

This sequence belongs to the ATPase epsilon chain family. As to quaternary structure, F-type ATPases have 2 components, CF(1) - the catalytic core - and CF(0) - the membrane proton channel. CF(1) has five subunits: alpha(3), beta(3), gamma(1), delta(1), epsilon(1). CF(0) has three main subunits: a, b and c.

The protein resides in the cell membrane. Functionally, produces ATP from ADP in the presence of a proton gradient across the membrane. The polypeptide is ATP synthase epsilon chain (Exiguobacterium sp. (strain ATCC BAA-1283 / AT1b)).